The chain runs to 150 residues: Ribonuclease K6 (150 aa).

Positions Met-1–Ala-23 are cleaved as a signal peptide. His-38 serves as the catalytic Proton acceptor. 4 cysteine pairs are disulfide-bonded: Cys-46/Cys-104, Cys-60/Cys-114, Cys-78/Cys-129, and Cys-85/Cys-92. A glycan (N-linked (GlcNAc...) asparagine) is linked at Asn-55. Residues Lys-61–Thr-65 and Lys-86 contribute to the substrate site. A glycan (N-linked (GlcNAc...) asparagine) is linked at Asn-100. Arg-105 provides a ligand contact to substrate. His-145 acts as the Proton donor in catalysis.

Belongs to the pancreatic ribonuclease family. As to quaternary structure, interacts (via N-terminus) with bacterial lipopolysaccharide (LPS).

It is found in the secreted. The protein localises to the lysosome. Its subcellular location is the cytoplasmic granule. Its function is as follows. Ribonuclease which shows a preference for the pyrimidines uridine and cytosine. Has potent antibacterial activity against a range of Gram-positive and Gram-negative bacteria, including P.aeruginosa, A.baumanii, M.luteus, S.aureus, E.faecalis, E.faecium, S.saprophyticus and E.coli. Causes loss of bacterial membrane integrity, and also promotes agglutination of Gram-negative bacteria. Probably contributes to urinary tract sterility. Bactericidal activity is independent of RNase activity. This chain is Ribonuclease K6 (RNASE6), found in Saimiri sciureus (Common squirrel monkey).